A 378-amino-acid chain; its full sequence is Myoglobin (378 aa).

Position 332 (His-332) interacts with heme.

It belongs to the indoleamine 2,3-dioxygenase family. In terms of assembly, homodimer. Requires heme as cofactor.

In terms of biological role, serves a reserve supply of oxygen and facilitates the movement of oxygen within muscles. The polypeptide is Myoglobin (Haliotis madaka (Giant abalone)).